Consider the following 290-residue polypeptide: Bifunctional protein FolD (290 aa).

NADP(+) is bound by residues 165-167, serine 194, and isoleucine 235; that span reads GRG.

This sequence belongs to the tetrahydrofolate dehydrogenase/cyclohydrolase family. As to quaternary structure, homodimer.

The enzyme catalyses (6R)-5,10-methylene-5,6,7,8-tetrahydrofolate + NADP(+) = (6R)-5,10-methenyltetrahydrofolate + NADPH. It catalyses the reaction (6R)-5,10-methenyltetrahydrofolate + H2O = (6R)-10-formyltetrahydrofolate + H(+). The protein operates within one-carbon metabolism; tetrahydrofolate interconversion. Functionally, catalyzes the oxidation of 5,10-methylenetetrahydrofolate to 5,10-methenyltetrahydrofolate and then the hydrolysis of 5,10-methenyltetrahydrofolate to 10-formyltetrahydrofolate. The sequence is that of Bifunctional protein FolD from Syntrophotalea carbinolica (strain DSM 2380 / NBRC 103641 / GraBd1) (Pelobacter carbinolicus).